We begin with the raw amino-acid sequence, 364 residues long: Probable dual-specificity RNA methyltransferase RlmN (364 aa).

Catalysis depends on Glu107, which acts as the Proton acceptor. A Radical SAM core domain is found at 113–346; that stretch reads HNYGNSVCVT…VTIRREHGHD (234 aa). Cys120 and Cys351 form a disulfide bridge. [4Fe-4S] cluster is bound by residues Cys127, Cys131, and Cys134. S-adenosyl-L-methionine contacts are provided by residues 177-178, Ser209, 232-234, and Asn308; these read GE and SLH. The active-site S-methylcysteine intermediate is the Cys351.

The protein belongs to the radical SAM superfamily. RlmN family. [4Fe-4S] cluster serves as cofactor.

It localises to the cytoplasm. The enzyme catalyses adenosine(2503) in 23S rRNA + 2 reduced [2Fe-2S]-[ferredoxin] + 2 S-adenosyl-L-methionine = 2-methyladenosine(2503) in 23S rRNA + 5'-deoxyadenosine + L-methionine + 2 oxidized [2Fe-2S]-[ferredoxin] + S-adenosyl-L-homocysteine. The catalysed reaction is adenosine(37) in tRNA + 2 reduced [2Fe-2S]-[ferredoxin] + 2 S-adenosyl-L-methionine = 2-methyladenosine(37) in tRNA + 5'-deoxyadenosine + L-methionine + 2 oxidized [2Fe-2S]-[ferredoxin] + S-adenosyl-L-homocysteine. In terms of biological role, specifically methylates position 2 of adenine 2503 in 23S rRNA and position 2 of adenine 37 in tRNAs. The chain is Probable dual-specificity RNA methyltransferase RlmN from Geobacillus thermodenitrificans (strain NG80-2).